The following is a 479-amino-acid chain: Glutamate--tRNA ligase 2 (479 aa).

A 'HIGH' region motif is present at residues Pro-18–Gly-28. A 'KMSKS' region motif is present at residues Lys-244–Arg-248. An ATP-binding site is contributed by Lys-247.

Belongs to the class-I aminoacyl-tRNA synthetase family. Glutamate--tRNA ligase type 1 subfamily. As to quaternary structure, monomer.

It is found in the cytoplasm. The enzyme catalyses tRNA(Glu) + L-glutamate + ATP = L-glutamyl-tRNA(Glu) + AMP + diphosphate. In terms of biological role, catalyzes the attachment of glutamate to tRNA(Glu) in a two-step reaction: glutamate is first activated by ATP to form Glu-AMP and then transferred to the acceptor end of tRNA(Glu). In Maricaulis maris (strain MCS10) (Caulobacter maris), this protein is Glutamate--tRNA ligase 2.